The following is a 1032-amino-acid chain: Chitin synthase 8 (1032 aa).

Pro residues-rich tracts occupy residues 1 to 11 and 26 to 41; these read MRPGDIYPPPQ and PPQPQPYPPQPYPPQQ. Residues 1-220 form a disordered region; sequence MRPGDIYPPP…DDDMNDSHPL (220 aa). Polar residues-rich tracts occupy residues 65-78, 98-107, and 143-160; these read MSPTPQEPQGSRYN, LPTQSLSPFN, and TNPSHLPPQQQLTPSYSY. Asparagine 78 carries an N-linked (GlcNAc...) asparagine glycan. Residues 176–188 are compositionally biased toward low complexity; that stretch reads PHHSSQSSVSSIP. Asparagine 215, asparagine 304, asparagine 473, asparagine 545, and asparagine 691 each carry an N-linked (GlcNAc...) asparagine glycan. 7 helical membrane passes run 728–748, 762–782, 796–816, 842–862, 870–890, 972–992, and 995–1015; these read TLNMVFAWFALGNYYIAFFVL, VNIPLHYIYIALLLWCFLLSL, SMVGFALITIYMLFAAIFLAV, IVISLLATYGLYIISSLMALE, FFQYLLIAPSYINVLNVYAFC, VLLVWTMTNGALVAVILQASG, and NSLATTYMGVLLYTVAGLAFF.

This sequence belongs to the chitin synthase family.

The protein localises to the cell membrane. The enzyme catalyses [(1-&gt;4)-N-acetyl-beta-D-glucosaminyl](n) + UDP-N-acetyl-alpha-D-glucosamine = [(1-&gt;4)-N-acetyl-beta-D-glucosaminyl](n+1) + UDP + H(+). In terms of biological role, polymerizes chitin, a structural polymer of the cell wall and septum, by transferring the sugar moiety of UDP-GlcNAc to the non-reducing end of the growing chitin polymer. This is Chitin synthase 8 from Cryptococcus neoformans var. grubii serotype A (strain H99 / ATCC 208821 / CBS 10515 / FGSC 9487) (Filobasidiella neoformans var. grubii).